A 625-amino-acid chain; its full sequence is Chaperone protein HtpG (625 aa).

An a; substrate-binding region spans residues 1-339 (MNKQTLSFQA…SSDLPLNVSR (339 aa)). Positions 340 to 557 (ELLQESRDVK…DGDISGHLAR (218 aa)) are b. A c region spans residues 558–625 (LLKQAGQSAP…YVQRVNRLLV (68 aa)).

The protein belongs to the heat shock protein 90 family. Homodimer.

It localises to the cytoplasm. Molecular chaperone. Has ATPase activity. This chain is Chaperone protein HtpG, found in Methylibium petroleiphilum (strain ATCC BAA-1232 / LMG 22953 / PM1).